We begin with the raw amino-acid sequence, 466 residues long: UDP-N-acetylmuramoylalanine--D-glutamate ligase (466 aa).

121 to 127 (GTNGKST) contributes to the ATP binding site.

The protein belongs to the MurCDEF family.

Its subcellular location is the cytoplasm. The catalysed reaction is UDP-N-acetyl-alpha-D-muramoyl-L-alanine + D-glutamate + ATP = UDP-N-acetyl-alpha-D-muramoyl-L-alanyl-D-glutamate + ADP + phosphate + H(+). It participates in cell wall biogenesis; peptidoglycan biosynthesis. Functionally, cell wall formation. Catalyzes the addition of glutamate to the nucleotide precursor UDP-N-acetylmuramoyl-L-alanine (UMA). The protein is UDP-N-acetylmuramoylalanine--D-glutamate ligase of Bradyrhizobium diazoefficiens (strain JCM 10833 / BCRC 13528 / IAM 13628 / NBRC 14792 / USDA 110).